A 179-amino-acid chain; its full sequence is Translation initiation factor IF-3 (179 aa).

The protein belongs to the IF-3 family. As to quaternary structure, monomer.

It is found in the cytoplasm. In terms of biological role, IF-3 binds to the 30S ribosomal subunit and shifts the equilibrium between 70S ribosomes and their 50S and 30S subunits in favor of the free subunits, thus enhancing the availability of 30S subunits on which protein synthesis initiation begins. The chain is Translation initiation factor IF-3 from Leptospira interrogans serogroup Icterohaemorrhagiae serovar copenhageni (strain Fiocruz L1-130).